Consider the following 276-residue polypeptide: Lipoyl synthase (276 aa).

Residues Cys-27, Cys-32, Cys-38, Cys-53, Cys-57, Cys-60, and Ser-266 each contribute to the [4Fe-4S] cluster site. Positions 39 to 255 (FGNKTATFMI…EEIGYEMGFK (217 aa)) constitute a Radical SAM core domain.

The protein belongs to the radical SAM superfamily. Lipoyl synthase family. It depends on [4Fe-4S] cluster as a cofactor.

The protein resides in the cytoplasm. It catalyses the reaction [[Fe-S] cluster scaffold protein carrying a second [4Fe-4S](2+) cluster] + N(6)-octanoyl-L-lysyl-[protein] + 2 oxidized [2Fe-2S]-[ferredoxin] + 2 S-adenosyl-L-methionine + 4 H(+) = [[Fe-S] cluster scaffold protein] + N(6)-[(R)-dihydrolipoyl]-L-lysyl-[protein] + 4 Fe(3+) + 2 hydrogen sulfide + 2 5'-deoxyadenosine + 2 L-methionine + 2 reduced [2Fe-2S]-[ferredoxin]. The protein operates within protein modification; protein lipoylation via endogenous pathway; protein N(6)-(lipoyl)lysine from octanoyl-[acyl-carrier-protein]: step 2/2. Its function is as follows. Catalyzes the radical-mediated insertion of two sulfur atoms into the C-6 and C-8 positions of the octanoyl moiety bound to the lipoyl domains of lipoate-dependent enzymes, thereby converting the octanoylated domains into lipoylated derivatives. The protein is Lipoyl synthase of Aquifex aeolicus (strain VF5).